Consider the following 101-residue polypeptide: uncharacterized protein (101 aa).

A run of 3 helical transmembrane segments spans residues 10–32, 45–67, and 77–99; these read FLPN…FFLY, LGIW…LPLI, and IAFT…ILSH.

It localises to the cell membrane. This is an uncharacterized protein from Bacillus subtilis (strain 168).